The chain runs to 602 residues: Beta-(1--&gt;2)glucan export ATP-binding/permease protein NdvA (602 aa).

The region spanning 21-311 is the ABC transmembrane type-1 domain; the sequence is GWVLAGANLL…VVGFVNSVFM (291 aa). The next 6 membrane-spanning stretches (helical) occupy residues 22-42, 68-88, 146-166, 167-187, 238-258, and 285-305; these read WVLAGANLLLAAAQFAEPVLF, LLLAWAVFGLFTIGCGAAVAL, EHFAALMSLVVLLPLSIYINW, RLALLLFALCVVFTVLTTLVV, LLAMQMPVLSWWALVTVITRA, and IVMFVSFATMLIQKLEQVVGF. An ABC transporter domain is found at 345–579; sequence VEFDNVSFSY…RGYFAELAHA (235 aa). Residue 378 to 385 coordinates ATP; the sequence is GATGAGKS.

The protein belongs to the ABC transporter superfamily. Beta-(1--&gt;2)glucan exporter (TC 3.A.1.108.1) family. In terms of assembly, homodimer.

Its subcellular location is the cell inner membrane. It carries out the reaction [(1-&gt;2)-beta-D-glucosyl](n)(in) + ATP + H2O = [(1-&gt;2)-beta-D-glucosyl](n)(out) + ADP + phosphate + H(+). Its function is as follows. Involved in Beta-(1--&gt;2)glucan export. Transmembrane domains (TMD) form a pore in the inner membrane and the ATP-binding domain (NBD) is responsible for energy generation. The protein is Beta-(1--&gt;2)glucan export ATP-binding/permease protein NdvA of Rhodopseudomonas palustris (strain BisA53).